Here is a 622-residue protein sequence, read N- to C-terminus: MAETPQPYLIFVFFVFTLTVATQTTGSVKCKTSLLRYPFGFSDGYPIRFNCSEITGEAVIGEFAVQEVTNSNIYVEIPPVCKRNIRKIEQLFRENLAPSKLQNIILVQGCKKQNKSSNCLIRNKFVENRLNLSKCKSPVSCLDGATTTTADVMSLGDVVNGSGCKYWFSSISQSQVSVNLGRLKLDWWLKGSCSNTTCSENADCAKVKLDDGGLGHRCTCREGFSGKAFTVPGGCHRLVYKRKGLHKLVVLGTAGILVGVLVIVVLIATYFFRNKQSASSERASIANRLLCELAGNSSVPFYTYKEIEKATDSFSDKNMLGTGAYGTVYAGEFPNSSCVAIKRLKHKDTTSIDQVVNEIKLLSSVSHPNLVRLLGCCFADGEPFLVYEFMPNGTLYQHLQHERGQPPLSWQLRLAIACQTANAIAHLHSSVNPPIYHRDIKSSNILLDHEFNSKISDFGLSRLGMSTDFEASHISTAPQGTPGYLDPQYHQDFQLSDKSDVYSFGVVLVEIISGFKVIDFTRPYSEVNLASLAVDRIGRGRVVDIIDPCLNKEINPKMFASIHNLAELAFRCLSFHRNMRPTMVEITEDLHRIKLMHYGTESGKFKNRSEIDMKRQQSFPRE.

Residues methionine 1 to alanine 21 form the signal peptide. At threonine 22 to lysine 247 the chain is on the extracellular side. N-linked (GlcNAc...) asparagine glycans are attached at residues asparagine 50, asparagine 114, asparagine 131, asparagine 160, and asparagine 195. The chain crosses the membrane as a helical span at residues leucine 248 to alanine 268. At threonine 269–glutamate 622 the chain is on the cytoplasmic side. The region spanning phenylalanine 314 to lysine 594 is the Protein kinase domain. Residues leucine 320 to valine 328 and lysine 342 contribute to the ATP site. Residue aspartate 439 is the Proton acceptor of the active site.

Belongs to the protein kinase superfamily. Ser/Thr protein kinase family.

Its subcellular location is the membrane. The enzyme catalyses L-seryl-[protein] + ATP = O-phospho-L-seryl-[protein] + ADP + H(+). It catalyses the reaction L-threonyl-[protein] + ATP = O-phospho-L-threonyl-[protein] + ADP + H(+). In terms of biological role, serine/threonine-protein kinase that may function as a signaling receptor of extracellular matrix component. The chain is Wall-associated receptor kinase-like 21 (WAKL21) from Arabidopsis thaliana (Mouse-ear cress).